Here is a 334-residue protein sequence, read N- to C-terminus: Beta-ketoacyl-[acyl-carrier-protein] synthase III (334 aa).

Residues Cys114 and His253 contribute to the active site. The ACP-binding stretch occupies residues 254–258 (QANIR). Residue Asn283 is part of the active site.

Belongs to the thiolase-like superfamily. FabH family. Homodimer.

The protein resides in the cytoplasm. The enzyme catalyses malonyl-[ACP] + acetyl-CoA + H(+) = 3-oxobutanoyl-[ACP] + CO2 + CoA. The protein operates within lipid metabolism; fatty acid biosynthesis. In terms of biological role, catalyzes the condensation reaction of fatty acid synthesis by the addition to an acyl acceptor of two carbons from malonyl-ACP. Catalyzes the first condensation reaction which initiates fatty acid synthesis and may therefore play a role in governing the total rate of fatty acid production. Possesses both acetoacetyl-ACP synthase and acetyl transacylase activities. Its substrate specificity determines the biosynthesis of branched-chain and/or straight-chain of fatty acids. The polypeptide is Beta-ketoacyl-[acyl-carrier-protein] synthase III (Campylobacter curvus (strain 525.92)).